A 706-amino-acid chain; its full sequence is Fatty acid oxidation complex subunit alpha (706 aa).

The interval 1 to 188 (MDKSFTLNRL…KMGLVDDVVP (188 aa)) is enoyl-CoA hydratase. Positions 308 to 706 (KAVNKVMVLG…MAESGSKFYE (399 aa)) are 3-hydroxyacyl-CoA dehydrogenase.

The protein in the N-terminal section; belongs to the enoyl-CoA hydratase/isomerase family. This sequence in the central section; belongs to the 3-hydroxyacyl-CoA dehydrogenase family. In terms of assembly, heterotetramer of two alpha chains (FadJ) and two beta chains (FadI).

It localises to the cytoplasm. The enzyme catalyses a (3S)-3-hydroxyacyl-CoA = a (2E)-enoyl-CoA + H2O. It carries out the reaction a 4-saturated-(3S)-3-hydroxyacyl-CoA = a (3E)-enoyl-CoA + H2O. It catalyses the reaction a (3S)-3-hydroxyacyl-CoA + NAD(+) = a 3-oxoacyl-CoA + NADH + H(+). The catalysed reaction is (3S)-3-hydroxybutanoyl-CoA = (3R)-3-hydroxybutanoyl-CoA. The protein operates within lipid metabolism; fatty acid beta-oxidation. Functionally, catalyzes the formation of a hydroxyacyl-CoA by addition of water on enoyl-CoA. Also exhibits 3-hydroxyacyl-CoA epimerase and 3-hydroxyacyl-CoA dehydrogenase activities. This chain is Fatty acid oxidation complex subunit alpha, found in Shewanella loihica (strain ATCC BAA-1088 / PV-4).